The chain runs to 384 residues: 8-amino-7-oxononanoate synthase (384 aa).

Substrate is bound at residue R21. 108-109 provides a ligand contact to pyridoxal 5'-phosphate; the sequence is GF. H133 contacts substrate. Residues S179, H207, and T233 each contribute to the pyridoxal 5'-phosphate site. K236 carries the post-translational modification N6-(pyridoxal phosphate)lysine. T352 provides a ligand contact to substrate.

It belongs to the class-II pyridoxal-phosphate-dependent aminotransferase family. BioF subfamily. Homodimer. Requires pyridoxal 5'-phosphate as cofactor.

It catalyses the reaction 6-carboxyhexanoyl-[ACP] + L-alanine + H(+) = (8S)-8-amino-7-oxononanoate + holo-[ACP] + CO2. Its pathway is cofactor biosynthesis; biotin biosynthesis. In terms of biological role, catalyzes the decarboxylative condensation of pimeloyl-[acyl-carrier protein] and L-alanine to produce 8-amino-7-oxononanoate (AON), [acyl-carrier protein], and carbon dioxide. This is 8-amino-7-oxononanoate synthase from Escherichia coli (strain K12 / DH10B).